The primary structure comprises 505 residues: uncharacterized protein (505 aa).

The signal sequence occupies residues 1–19; the sequence is MILFTAIILVASVVHVVVS. Topologically, residues 20-483 are extracellular; the sequence is SPQQCYYCVE…EQPNSAPRGE (464 aa). The helical transmembrane segment at 484–504 threads the bilayer; the sequence is IHQLFRCTFVAVFIVFACFIV. Position 505 (Cys505) is a topological domain, cytoplasmic.

In terms of tissue distribution, component of the acid-insoluble and acid-soluble organic matrix of the aragonitic skeleton (at protein level).

The protein resides in the membrane. This is an uncharacterized protein from Acropora millepora (Staghorn coral).